A 233-amino-acid chain; its full sequence is Small ribosomal subunit protein uS3 (233 aa).

The region spanning 39–107 (VRKYLTKELE…PAQINIAEVR (69 aa)) is the KH type-2 domain.

Belongs to the universal ribosomal protein uS3 family. In terms of assembly, part of the 30S ribosomal subunit. Forms a tight complex with proteins S10 and S14.

In terms of biological role, binds the lower part of the 30S subunit head. Binds mRNA in the 70S ribosome, positioning it for translation. The chain is Small ribosomal subunit protein uS3 from Pectobacterium carotovorum subsp. carotovorum (strain PC1).